The chain runs to 284 residues: Nucleoid occlusion protein (284 aa).

Residues 143-162 (EALAQRVGKSQSAIANKMRL) constitute a DNA-binding region (H-T-H motif).

This sequence belongs to the ParB family.

Its subcellular location is the cytoplasm. It is found in the nucleoid. Functionally, effects nucleoid occlusion by binding relatively nonspecifically to DNA and preventing the assembly of the division machinery in the vicinity of the nucleoid, especially under conditions that disturb the cell cycle. It helps to coordinate cell division and chromosome segregation by preventing the formation of the Z ring through the nucleoid, which would cause chromosome breakage. In Listeria monocytogenes serotype 4b (strain CLIP80459), this protein is Nucleoid occlusion protein.